The primary structure comprises 404 residues: Cysteine desulfurase IscS (404 aa).

Residues 75–76, Asn155, Gln183, and 203–205 contribute to the pyridoxal 5'-phosphate site; these read AT and TGH. Residue Lys206 is modified to N6-(pyridoxal phosphate)lysine. Position 243 (Thr243) interacts with pyridoxal 5'-phosphate. The Cysteine persulfide intermediate role is filled by Cys328. Residue Cys328 participates in [2Fe-2S] cluster binding.

It belongs to the class-V pyridoxal-phosphate-dependent aminotransferase family. NifS/IscS subfamily. In terms of assembly, homodimer. Forms a heterotetramer with IscU, interacts with other sulfur acceptors. Pyridoxal 5'-phosphate is required as a cofactor.

The protein localises to the cytoplasm. It carries out the reaction (sulfur carrier)-H + L-cysteine = (sulfur carrier)-SH + L-alanine. Its pathway is cofactor biosynthesis; iron-sulfur cluster biosynthesis. Its function is as follows. Master enzyme that delivers sulfur to a number of partners involved in Fe-S cluster assembly, tRNA modification or cofactor biosynthesis. Catalyzes the removal of elemental sulfur atoms from cysteine to produce alanine. Functions as a sulfur delivery protein for Fe-S cluster synthesis onto IscU, an Fe-S scaffold assembly protein, as well as other S acceptor proteins. This Enterobacter sp. (strain 638) protein is Cysteine desulfurase IscS.